Reading from the N-terminus, the 240-residue chain is FMN-dependent NADH:quinone oxidoreductase 2 (240 aa).

Residues Ser10 and 23–25 (SIS) each bind FMN.

Belongs to the azoreductase type 1 family. As to quaternary structure, homodimer. FMN is required as a cofactor.

It carries out the reaction 2 a quinone + NADH + H(+) = 2 a 1,4-benzosemiquinone + NAD(+). It catalyses the reaction N,N-dimethyl-1,4-phenylenediamine + anthranilate + 2 NAD(+) = 2-(4-dimethylaminophenyl)diazenylbenzoate + 2 NADH + 2 H(+). In terms of biological role, quinone reductase that provides resistance to thiol-specific stress caused by electrophilic quinones. Functionally, also exhibits azoreductase activity. Catalyzes the reductive cleavage of the azo bond in aromatic azo compounds to the corresponding amines. This Idiomarina loihiensis (strain ATCC BAA-735 / DSM 15497 / L2-TR) protein is FMN-dependent NADH:quinone oxidoreductase 2.